The chain runs to 669 residues: uncharacterized protein (669 aa).

6 consecutive transmembrane segments (helical) span residues 39–61, 124–146, 153–175, 190–212, 221–243, and 263–285; these read LCPL…GTSW, ISLW…LISI, GIIY…YALG, GLAF…FFGV, FAPG…QTAL, and IAAG…IRYL. 2 RCK C-terminal domains span residues 316–397 and 398–483; these read AGSL…KLIG and KESD…LGGR. The next 5 helical transmembrane spans lie at 484–506, 516–538, 558–580, 585–607, and 645–667; these read PILN…GYIF, IPFA…YWRS, IGLN…ESFH, IWVA…VVGI, and VPYP…FAML.

The protein belongs to the AAE transporter (TC 2.A.81) family.

It is found in the cell membrane. This is an uncharacterized protein from Desulfotalea psychrophila (strain LSv54 / DSM 12343).